Here is a 335-residue protein sequence, read N- to C-terminus: Acetyl-coenzyme A carboxylase carboxyl transferase subunit alpha (335 aa).

A CoA carboxyltransferase C-terminal domain is found at 48 to 308 (TLEKKVEALR…KGILIEELSA (261 aa)).

Belongs to the AccA family. As to quaternary structure, acetyl-CoA carboxylase is a heterohexamer composed of biotin carboxyl carrier protein (AccB), biotin carboxylase (AccC) and two subunits each of ACCase subunit alpha (AccA) and ACCase subunit beta (AccD).

It localises to the cytoplasm. The enzyme catalyses N(6)-carboxybiotinyl-L-lysyl-[protein] + acetyl-CoA = N(6)-biotinyl-L-lysyl-[protein] + malonyl-CoA. It participates in lipid metabolism; malonyl-CoA biosynthesis; malonyl-CoA from acetyl-CoA: step 1/1. Component of the acetyl coenzyme A carboxylase (ACC) complex. First, biotin carboxylase catalyzes the carboxylation of biotin on its carrier protein (BCCP) and then the CO(2) group is transferred by the carboxyltransferase to acetyl-CoA to form malonyl-CoA. The polypeptide is Acetyl-coenzyme A carboxylase carboxyl transferase subunit alpha (Chlorobium phaeovibrioides (strain DSM 265 / 1930) (Prosthecochloris vibrioformis (strain DSM 265))).